We begin with the raw amino-acid sequence, 567 residues long: Potassium-transporting ATPase potassium-binding subunit (567 aa).

11 consecutive transmembrane segments (helical) span residues 5–25 (GWIQ…PLGG), 64–84 (TTYA…LYML), 136–156 (GLTV…IALI), 179–199 (LYVL…LGVP), 254–274 (ISNM…TNVF), 285–305 (WAIF…CYWA), 332–352 (IAMS…AVIA), 359–376 (ALGG…EIII), 421–441 (MLAV…ASVI), 486–506 (ITIG…AMAI), and 529–549 (LFVG…FFPA).

Belongs to the KdpA family. As to quaternary structure, the system is composed of three essential subunits: KdpA, KdpB and KdpC.

It localises to the cell inner membrane. In terms of biological role, part of the high-affinity ATP-driven potassium transport (or Kdp) system, which catalyzes the hydrolysis of ATP coupled with the electrogenic transport of potassium into the cytoplasm. This subunit binds the periplasmic potassium ions and delivers the ions to the membrane domain of KdpB through an intramembrane tunnel. The sequence is that of Potassium-transporting ATPase potassium-binding subunit from Brucella anthropi (strain ATCC 49188 / DSM 6882 / CCUG 24695 / JCM 21032 / LMG 3331 / NBRC 15819 / NCTC 12168 / Alc 37) (Ochrobactrum anthropi).